A 438-amino-acid chain; its full sequence is Methylenetetrahydrofolate--tRNA-(uracil-5-)-methyltransferase TrmFO (438 aa).

Residue 9–14 (GAGLAG) participates in FAD binding.

It belongs to the MnmG family. TrmFO subfamily. The cofactor is FAD.

It is found in the cytoplasm. It catalyses the reaction uridine(54) in tRNA + (6R)-5,10-methylene-5,6,7,8-tetrahydrofolate + NADH + H(+) = 5-methyluridine(54) in tRNA + (6S)-5,6,7,8-tetrahydrofolate + NAD(+). It carries out the reaction uridine(54) in tRNA + (6R)-5,10-methylene-5,6,7,8-tetrahydrofolate + NADPH + H(+) = 5-methyluridine(54) in tRNA + (6S)-5,6,7,8-tetrahydrofolate + NADP(+). Its function is as follows. Catalyzes the folate-dependent formation of 5-methyl-uridine at position 54 (M-5-U54) in all tRNAs. The protein is Methylenetetrahydrofolate--tRNA-(uracil-5-)-methyltransferase TrmFO of Lactobacillus acidophilus (strain ATCC 700396 / NCK56 / N2 / NCFM).